The following is a 318-amino-acid chain: MTKDNEEKTYSEVEFLTVDGLKLRGRLYLGEANGPALVMAHGFNAVKEIVIPWAAEVFQKNGISVLLFDPRNYGESEGMPRQEVDPEKQIEDYFDAVTFLRQQPGIDPEAIGLWGVSTSGATAIGAACFDKRVRLIISVCPLIEATFREEMVPDVMAQIIREREALVAARTAGQQSPQPTLVPMINQVGVSPMGFNAIHGKNFYEEMPWFKETAPNFRPHTTTLTYYKMLRWHPLSNIRCLSPTPIQMLIPGKDDVCPTQEQLDFFEALPGPKRMEYYEDRNHHGLLLGSAFEGVMEAQVRFVQDVLAGKFALKSGSQ.

It belongs to the polyketide transferase af380 family.

The enzyme catalyses aculene D + L-prolyl-[peptidyl-carrier protein] = aculene B + holo-[peptidyl-carrier protein]. It carries out the reaction aculene C + L-prolyl-[peptidyl-carrier protein] = aculene A + holo-[peptidyl-carrier protein]. It functions in the pathway secondary metabolite biosynthesis. In terms of biological role, thiohydrolase; part of the gene cluster that mediates the biosynthesis of aculenes, a unique type of norsesquiterpenes that contain a nordaucane skeleton linked to an L-proline moiety and are of mixed biosynthetic origin. The pathway begins with the synthesis of dauca-4,7-diene by the terpene cyclase aneC using farnesyl pyrophosphate (FPP) as substrate. The cytochrome P450 monooxygenase aneF then performs the initial oxidation at C-12 of dauca-4,7-diene to yield asperaculane D. Asperaculane D is substrate of the cytochrome P450 monooxygenase aneD for C-10 hydroxylation to yield asperaculane E. The cytochrome P450 monooxygenase aneG then converts asperaculane E into aculene D via C-2 oxidation. The monomodular nonribosomal peptide synthtase aneB adenylates L-proline and the thiohydrolase aneE transfers this activated L-proline derivative to aculenes D and C to produce respectively aculenes B and A. The dioxygenase aneA converts aculene D into aculene C, and aculene B into aculene A by introducing the 5,6-alkene moiety. Asperculanes A, B, C and F, as well as 14-prolyl asperculane C, might be shunt products of the pathway. This is Thiohydrolase aneE from Aspergillus aculeatus (strain ATCC 16872 / CBS 172.66 / WB 5094).